A 568-amino-acid polypeptide reads, in one-letter code: Envelope glycoprotein E (568 aa).

The N-terminal stretch at 1 to 20 (MMPATLAGLALAVTVATMFA) is a signal peptide. The Virion surface portion of the chain corresponds to 21–422 (QRVDSTTIHH…GGGPGNSKRR (402 aa)). 3 N-linked (GlcNAc...) asparagine; by host glycosylation sites follow: asparagine 88, asparagine 179, and asparagine 248. Residues cysteine 271 and cysteine 280 are joined by a disulfide bond. The helical transmembrane segment at 423–443 (AAVLGAAVWIALTLLILGGLG) threads the bilayer. Over 444–568 (AYVAVNKKCL…ANKTFPSQRY (125 aa)) the chain is Intravirion. The Internalization motif motif lies at 465–468 (KPTL). Residues 470–534 (THAHTYTSLP…SRRNSFGPTL (65 aa)) form a disordered region. Positions 482–497 (GDLSLEQDAEDEDEDE) are acidic. Over residues 486–500 (LEQDAEDEDEDEEEL) the composition is skewed to acidic residues. Positions 515–526 (KSSRSPSRRSSR) are enriched in basic residues.

This sequence belongs to the alphaherpesvirinae glycoprotein E family. In terms of assembly, interacts with gI. In terms of processing, phosphorylated on serines within the acidic cluster. Phosphorylation determines whether endocytosed viral gE traffics to the trans-Golgi network or recycles to the cell membrane.

The protein resides in the virion membrane. Its subcellular location is the host cell membrane. The protein localises to the host cell junction. It is found in the host Golgi apparatus membrane. It localises to the host endosome membrane. Functionally, in epithelial cells, the heterodimer gE/gI is required for the cell-to-cell spread of the virus, by sorting nascent virions to cell junctions. Once the virus reaches the cell junctions, virus particles can spread to adjacent cells extremely rapidly through interactions with cellular receptors that accumulate at these junctions. Implicated in basolateral spread in polarized cells. In neuronal cells, gE/gI is essential for the anterograde spread of the infection throughout the host nervous system. Together with US9, the heterodimer gE/gI is involved in the sorting and transport of viral structural components toward axon tips. In Psittacid herpesvirus 1 (isolate Amazon parrot/-/97-0001/1997) (PsHV-1), this protein is Envelope glycoprotein E (US8).